The following is a 474-amino-acid chain: ATP synthase subunit beta 2 (474 aa).

G157–T164 lines the ATP pocket.

This sequence belongs to the ATPase alpha/beta chains family. As to quaternary structure, F-type ATPases have 2 components, CF(1) - the catalytic core - and CF(0) - the membrane proton channel. CF(1) has five subunits: alpha(3), beta(3), gamma(1), delta(1), epsilon(1). CF(0) has three main subunits: a(1), b(2) and c(9-12). The alpha and beta chains form an alternating ring which encloses part of the gamma chain. CF(1) is attached to CF(0) by a central stalk formed by the gamma and epsilon chains, while a peripheral stalk is formed by the delta and b chains.

Its subcellular location is the cell inner membrane. The catalysed reaction is ATP + H2O + 4 H(+)(in) = ADP + phosphate + 5 H(+)(out). Functionally, produces ATP from ADP in the presence of a proton gradient across the membrane. The catalytic sites are hosted primarily by the beta subunits. The sequence is that of ATP synthase subunit beta 2 from Polaromonas naphthalenivorans (strain CJ2).